The chain runs to 1389 residues: DNA-directed RNA polymerase subunit beta' (1389 aa).

4 residues coordinate Zn(2+): Cys-73, Cys-75, Cys-88, and Cys-91. Residues Asp-464, Asp-466, and Asp-468 each coordinate Mg(2+). Cys-810, Cys-884, Cys-891, and Cys-894 together coordinate Zn(2+).

Belongs to the RNA polymerase beta' chain family. The RNAP catalytic core consists of 2 alpha, 1 beta, 1 beta' and 1 omega subunit. When a sigma factor is associated with the core the holoenzyme is formed, which can initiate transcription. Mg(2+) is required as a cofactor. Zn(2+) serves as cofactor.

It catalyses the reaction RNA(n) + a ribonucleoside 5'-triphosphate = RNA(n+1) + diphosphate. In terms of biological role, DNA-dependent RNA polymerase catalyzes the transcription of DNA into RNA using the four ribonucleoside triphosphates as substrates. In Pelagibacter ubique (strain HTCC1062), this protein is DNA-directed RNA polymerase subunit beta'.